A 400-amino-acid polypeptide reads, in one-letter code: Subtilisin-like protease 7 (400 aa).

Residues 1–20 form the signal peptide; it reads MGFITKAIPLALAAASVING. Positions 21 to 119 are excised as a propeptide; sequence AEILETRAGV…IERDARVQIN (99 aa). An Inhibitor I9 domain is found at 36 to 118; the sequence is KYIVVMNDGI…YIERDARVQI (83 aa). Positions 129–400 constitute a Peptidase S8 domain; the sequence is SWGLARVGSK…SKLINNGSGM (272 aa). Catalysis depends on charge relay system residues Asp-161 and His-192. Asn-222 and Asn-252 each carry an N-linked (GlcNAc...) asparagine glycan. Catalysis depends on Ser-346, which acts as the Charge relay system. Residue Asn-396 is glycosylated (N-linked (GlcNAc...) asparagine).

This sequence belongs to the peptidase S8 family.

Its subcellular location is the secreted. Functionally, secreted subtilisin-like serine protease with keratinolytic activity that contributes to pathogenicity. This chain is Subtilisin-like protease 7 (SUB7), found in Trichophyton soudanense.